The primary structure comprises 346 residues: Melanoma-associated antigen B3 (346 aa).

The tract at residues 1 to 35 (MPRGQKSTLHAREKRQQTRGQTQDHQGAQITATNK) is disordered. Residues 18 to 33 (TRGQTQDHQGAQITAT) are compositionally biased toward polar residues. One can recognise an MAGE domain in the interval 111-310 (LIMKTNMLVQ…SAFQFWYEEA (200 aa)).

Expressed in testis.

The protein is Melanoma-associated antigen B3 (MAGEB3) of Homo sapiens (Human).